The sequence spans 139 residues: Transcription antitermination protein NusB (139 aa).

It belongs to the NusB family.

Involved in transcription antitermination. Required for transcription of ribosomal RNA (rRNA) genes. Binds specifically to the boxA antiterminator sequence of the ribosomal RNA (rrn) operons. The chain is Transcription antitermination protein NusB from Idiomarina loihiensis (strain ATCC BAA-735 / DSM 15497 / L2-TR).